The sequence spans 148 residues: Lysozyme C, milk isozyme (148 aa).

The signal sequence occupies residues 1-18 (MKALLIVGLLLLSVAVQG). The 130-residue stretch at 19 to 148 (KKFQRCELAR…LRSYVQGCRV (130 aa)) folds into the C-type lysozyme domain. Disulfide bonds link Cys-24-Cys-146, Cys-48-Cys-134, Cys-83-Cys-99, and Cys-95-Cys-113. Active-site residues include Glu-53 and Asp-71.

Belongs to the glycosyl hydrolase 22 family.

It catalyses the reaction Hydrolysis of (1-&gt;4)-beta-linkages between N-acetylmuramic acid and N-acetyl-D-glucosamine residues in a peptidoglycan and between N-acetyl-D-glucosamine residues in chitodextrins.. Functionally, lysozymes have primarily a bacteriolytic function; those in tissues and body fluids are associated with the monocyte-macrophage system and enhance the activity of immunoagents. The sequence is that of Lysozyme C, milk isozyme from Bos taurus (Bovine).